We begin with the raw amino-acid sequence, 49 residues long: Small ribosomal subunit protein eS31 (49 aa).

Positions 21, 24, 39, and 42 each coordinate Zn(2+). Residues 21–42 (CPRCGPGTFLADHKNRLTCGKC) form a C4-type zinc finger.

It belongs to the eukaryotic ribosomal protein eS31 family. In terms of assembly, part of the 30S ribosomal subunit. It depends on Zn(2+) as a cofactor.

This chain is Small ribosomal subunit protein eS31, found in Methanosarcina barkeri (strain Fusaro / DSM 804).